The chain runs to 283 residues: MNLFEAVILGIVQGLTEFLPISSTAHLRIIPALAGWKDPGAAFTAIVQIGTLAAVLIYFFRDITAIVREVVAGILKGRPLGTTEAKMGWMIAAGTIPIVIFGLLFKNEIETSLRSLYWISGALIGLALLLTIAEKRMKNQLRQGVTMKSMENIGWKDALLIGLIQSIALIPGSSRSGVTITGGLFLNLSRETAARFSFLLSLPSVLAAGVFQLYKSWDLIISSPDNLIAIIVATIVSGIVGYASIAFLLNYLKSHTTSVFIIYRLLLGSGILLMLATGMLPAT.

Helical transmembrane passes span 40–60, 85–105, 113–133, 153–173, 193–213, 227–247, and 259–279; these read GAAF…IYFF, AKMG…GLLF, LRSL…LTIA, IGWK…IPGS, AARF…VFQL, LIAI…SIAF, and VFII…ATGM.

The protein belongs to the UppP family.

It is found in the cell inner membrane. It carries out the reaction di-trans,octa-cis-undecaprenyl diphosphate + H2O = di-trans,octa-cis-undecaprenyl phosphate + phosphate + H(+). Its function is as follows. Catalyzes the dephosphorylation of undecaprenyl diphosphate (UPP). Confers resistance to bacitracin. This Chlorobium limicola (strain DSM 245 / NBRC 103803 / 6330) protein is Undecaprenyl-diphosphatase.